A 270-amino-acid polypeptide reads, in one-letter code: Putative phosphoenolpyruvate synthase regulatory protein (270 aa).

150–157 contributes to the ADP binding site; that stretch reads GVSRCGKT.

It belongs to the pyruvate, phosphate/water dikinase regulatory protein family. PSRP subfamily.

It carries out the reaction [pyruvate, water dikinase] + ADP = [pyruvate, water dikinase]-phosphate + AMP + H(+). The enzyme catalyses [pyruvate, water dikinase]-phosphate + phosphate + H(+) = [pyruvate, water dikinase] + diphosphate. In terms of biological role, bifunctional serine/threonine kinase and phosphorylase involved in the regulation of the phosphoenolpyruvate synthase (PEPS) by catalyzing its phosphorylation/dephosphorylation. The polypeptide is Putative phosphoenolpyruvate synthase regulatory protein (Shewanella sp. (strain ANA-3)).